The sequence spans 147 residues: SsrA-binding protein (147 aa).

The protein belongs to the SmpB family.

It is found in the cytoplasm. In terms of biological role, required for rescue of stalled ribosomes mediated by trans-translation. Binds to transfer-messenger RNA (tmRNA), required for stable association of tmRNA with ribosomes. tmRNA and SmpB together mimic tRNA shape, replacing the anticodon stem-loop with SmpB. tmRNA is encoded by the ssrA gene; the 2 termini fold to resemble tRNA(Ala) and it encodes a 'tag peptide', a short internal open reading frame. During trans-translation Ala-aminoacylated tmRNA acts like a tRNA, entering the A-site of stalled ribosomes, displacing the stalled mRNA. The ribosome then switches to translate the ORF on the tmRNA; the nascent peptide is terminated with the 'tag peptide' encoded by the tmRNA and targeted for degradation. The ribosome is freed to recommence translation, which seems to be the essential function of trans-translation. This Mycoplasma pneumoniae (strain ATCC 29342 / M129 / Subtype 1) (Mycoplasmoides pneumoniae) protein is SsrA-binding protein.